The sequence spans 320 residues: HPr kinase/phosphorylase (320 aa).

Active-site residues include His-141 and Lys-162. 156–163 (GHSGLGKS) contacts ATP. Ser-163 contributes to the Mg(2+) binding site. Asp-180 functions as the Proton acceptor; for phosphorylation activity. Proton donor; for dephosphorylation activity in the catalytic mechanism. An important for the catalytic mechanism of both phosphorylation and dephosphorylation region spans residues 204-213 (LEVRGLGILN). Mg(2+) is bound at residue Glu-205. Arg-248 is an active-site residue. The important for the catalytic mechanism of dephosphorylation stretch occupies residues 269 to 274 (PVAVGR).

Belongs to the HPrK/P family. Homohexamer. Mg(2+) is required as a cofactor.

It carries out the reaction [HPr protein]-L-serine + ATP = [HPr protein]-O-phospho-L-serine + ADP + H(+). The enzyme catalyses [HPr protein]-O-phospho-L-serine + phosphate + H(+) = [HPr protein]-L-serine + diphosphate. In terms of biological role, catalyzes the ATP- as well as the pyrophosphate-dependent phosphorylation of a specific serine residue in HPr, a phosphocarrier protein of the phosphoenolpyruvate-dependent sugar phosphotransferase system (PTS). HprK/P also catalyzes the pyrophosphate-producing, inorganic phosphate-dependent dephosphorylation (phosphorolysis) of seryl-phosphorylated HPr (P-Ser-HPr). The chain is HPr kinase/phosphorylase from Neisseria meningitidis serogroup B (strain ATCC BAA-335 / MC58).